The chain runs to 142 residues: Coactosin-like protein (142 aa).

Ala2 bears the N-acetylalanine mark. Positions 2–130 (ATKIDKEACR…EEDFIKSELK (129 aa)) constitute an ADF-H domain. The flexible and important for F-actin binding stretch occupies residues 66 to 75 (TGDAMSKRSK). 2 positions are modified to N6-acetyllysine: Lys102 and Lys126.

This sequence belongs to the actin-binding proteins ADF family. Coactosin subfamily. As to quaternary structure, interacts with 5-lipoxygenase (ALOX5/5LO) in a calcium-independent manner. Binds to F-actin with a stoichiometry of 1:2. In terms of tissue distribution, widely expressed with highest levels in placenta, lung, kidney and peripheral blood leukocytes and lower levels in brain, liver and pancreas.

The protein resides in the cytoplasm. Its subcellular location is the cytoskeleton. It localises to the nucleus. In terms of biological role, binds to F-actin in a calcium-independent manner. Has no direct effect on actin depolymerization. Acts as a chaperone for ALOX5 (5LO), influencing both its stability and activity in leukotrienes synthesis. The chain is Coactosin-like protein (COTL1) from Homo sapiens (Human).